The chain runs to 279 residues: Putative phosphoenolpyruvate synthase regulatory protein (279 aa).

Gly159–Thr166 contacts ADP.

Belongs to the pyruvate, phosphate/water dikinase regulatory protein family. PSRP subfamily.

It catalyses the reaction [pyruvate, water dikinase] + ADP = [pyruvate, water dikinase]-phosphate + AMP + H(+). It carries out the reaction [pyruvate, water dikinase]-phosphate + phosphate + H(+) = [pyruvate, water dikinase] + diphosphate. In terms of biological role, bifunctional serine/threonine kinase and phosphorylase involved in the regulation of the phosphoenolpyruvate synthase (PEPS) by catalyzing its phosphorylation/dephosphorylation. This chain is Putative phosphoenolpyruvate synthase regulatory protein, found in Ralstonia nicotianae (strain ATCC BAA-1114 / GMI1000) (Ralstonia solanacearum).